A 221-amino-acid polypeptide reads, in one-letter code: UPF0502 protein PSPA7_1674 (221 aa).

It belongs to the UPF0502 family.

The chain is UPF0502 protein PSPA7_1674 from Pseudomonas paraeruginosa (strain DSM 24068 / PA7) (Pseudomonas aeruginosa (strain PA7)).